We begin with the raw amino-acid sequence, 439 residues long: Xylose isomerase (439 aa).

Catalysis depends on residues histidine 101 and aspartate 104. Residues glutamate 232, glutamate 268, histidine 271, aspartate 296, aspartate 307, aspartate 309, and aspartate 339 each coordinate Mg(2+).

It belongs to the xylose isomerase family. Homotetramer. Mg(2+) serves as cofactor.

The protein resides in the cytoplasm. The enzyme catalyses alpha-D-xylose = alpha-D-xylulofuranose. The chain is Xylose isomerase from Photobacterium profundum (strain SS9).